Consider the following 178-residue polypeptide: Large ribosomal subunit protein bL25 (178 aa).

It belongs to the bacterial ribosomal protein bL25 family. CTC subfamily. Part of the 50S ribosomal subunit; part of the 5S rRNA/L5/L18/L25 subcomplex. Contacts the 5S rRNA. Binds to the 5S rRNA independently of L5 and L18.

In terms of biological role, this is one of the proteins that binds to the 5S RNA in the ribosome where it forms part of the central protuberance. The protein is Large ribosomal subunit protein bL25 of Helicobacter hepaticus (strain ATCC 51449 / 3B1).